The sequence spans 391 residues: Pyruvate dehydrogenase E1 component subunit alpha type II, mitochondrial (391 aa).

Residues 1–17 (SNIFKGPTVGSSVVAMS) constitute a mitochondrion transit peptide. Residues histidine 83, tyrosine 109, arginine 110, glycine 148, glycine 156, valine 158, aspartate 187, glycine 188, alanine 189, asparagine 216, and tyrosine 218 each contribute to the pyruvate site. Tyrosine 109 and arginine 110 together coordinate thiamine diphosphate. Thiamine diphosphate contacts are provided by glycine 156, valine 158, aspartate 187, glycine 188, alanine 189, and asparagine 216. Mg(2+) is bound at residue aspartate 187. Positions 216 and 218 each coordinate Mg(2+). Histidine 283 contributes to the thiamine diphosphate binding site. Serine 284 and serine 291 each carry phosphoserine.

In terms of assembly, heterotetramer of two PDHA2 and two PDHB subunits. The heterotetramer interacts with DLAT, and is part of the multimeric pyruvate dehydrogenase complex that contains multiple copies of pyruvate dehydrogenase (E1), dihydrolipoamide acetyltransferase (DLAT, E2) and lipoamide dehydrogenase (DLD, E3). Requires thiamine diphosphate as cofactor. The cofactor is Mg(2+).

Its subcellular location is the mitochondrion matrix. The catalysed reaction is N(6)-[(R)-lipoyl]-L-lysyl-[protein] + pyruvate + H(+) = N(6)-[(R)-S(8)-acetyldihydrolipoyl]-L-lysyl-[protein] + CO2. With respect to regulation, pyruvate dehydrogenase activity is inhibited by phosphorylation of PDHA2; it is reactivated by dephosphorylation. Functionally, the pyruvate dehydrogenase complex catalyzes the overall conversion of pyruvate to acetyl-CoA and CO(2), and thereby links the glycolytic pathway to the tricarboxylic cycle. This Ascaris suum (Pig roundworm) protein is Pyruvate dehydrogenase E1 component subunit alpha type II, mitochondrial.